An 898-amino-acid chain; its full sequence is Filament-like plant protein 7 (898 aa).

Coiled-coil stretches lie at residues 23–224 (EVVA…TAEA) and 287–320 (EKIN…LQFS). Disordered regions lie at residues 429–482 (DNRP…DIKS), 693–723 (PGNQ…KLEE), and 777–835 (KSNN…GGNS). Low complexity predominate over residues 434–459 (SSPICSSDSISATGPVENESNENSSE). The span at 460–469 (ATKTSGTVYS) shows a compositional bias: polar residues. The stretch at 703–764 (VEEEANDKTA…KALTNSKETA (62 aa)) forms a coiled coil. Residues 808–822 (MKAEDHNTGESKDQK) are compositionally biased toward basic and acidic residues.

The protein belongs to the FPP family. In terms of assembly, interacts with WPP/MAF proteins.

The chain is Filament-like plant protein 7 (FPP7) from Arabidopsis thaliana (Mouse-ear cress).